A 399-amino-acid chain; its full sequence is Methylmalonic aciduria type A homolog, mitochondrial (399 aa).

The transit peptide at 1-15 (MVVRSLLRVSRLTSA) directs the protein to the mitochondrion. GTP is bound by residues 131–139 (GSPGVGKSS), D274, and 310–312 (SIM).

Belongs to the SIMIBI class G3E GTPase family. ArgK/MeaB subfamily.

The protein resides in the mitochondrion. May have GTPase activity. May also bind and hydrolyze ATP. May function as chaperone. Likely to have a role in propionyl-CoA and adenosylcobalamin metabolism. This chain is Methylmalonic aciduria type A homolog, mitochondrial (mmaa-1), found in Caenorhabditis elegans.